Here is a 505-residue protein sequence, read N- to C-terminus: Aspartyl/glutamyl-tRNA(Asn/Gln) amidotransferase subunit B (505 aa).

Belongs to the GatB/GatE family. GatB subfamily. As to quaternary structure, heterotrimer of A, B and C subunits.

It catalyses the reaction L-glutamyl-tRNA(Gln) + L-glutamine + ATP + H2O = L-glutaminyl-tRNA(Gln) + L-glutamate + ADP + phosphate + H(+). It carries out the reaction L-aspartyl-tRNA(Asn) + L-glutamine + ATP + H2O = L-asparaginyl-tRNA(Asn) + L-glutamate + ADP + phosphate + 2 H(+). Functionally, allows the formation of correctly charged Asn-tRNA(Asn) or Gln-tRNA(Gln) through the transamidation of misacylated Asp-tRNA(Asn) or Glu-tRNA(Gln) in organisms which lack either or both of asparaginyl-tRNA or glutaminyl-tRNA synthetases. The reaction takes place in the presence of glutamine and ATP through an activated phospho-Asp-tRNA(Asn) or phospho-Glu-tRNA(Gln). In Haloarcula marismortui (strain ATCC 43049 / DSM 3752 / JCM 8966 / VKM B-1809) (Halobacterium marismortui), this protein is Aspartyl/glutamyl-tRNA(Asn/Gln) amidotransferase subunit B.